Consider the following 1044-residue polypeptide: Spindle assembly checkpoint serine/threonine-protein kinase bub1 (1044 aa).

Positions 36–204 (FQEELDIIEE…SSPFPPPRIV (169 aa)) constitute a BUB1 N-terminal domain. Disordered stretches follow at residues 209–259 (PVSS…PLLY), 317–343 (VHHDSSSSNVSPIYKNPVAEQSDTPTR), 404–446 (ESLE…SQEE), 484–555 (KNSN…DSNS), and 685–705 (IKPKAGGPGRRRSSNRHSLDG). Over residues 223–239 (QVFSDASSSRDSQNASD) the composition is skewed to polar residues. Over residues 430-442 (NSSNSGATSLTGR) the composition is skewed to polar residues. Low complexity predominate over residues 504–518 (STLQEETATGTTSTT). Polar residues predominate over residues 544–555 (RSPQYSTVDSNS). Threonine 550 carries the post-translational modification Phosphothreonine. Residues 718–1044 (LSVISKLGQG…LLKSIEKRKI (327 aa)) enclose the Protein kinase domain. Residues alanine 728, phenylalanine 729, alanine 730, lysine 762, and aspartate 809 each coordinate ATP. The active-site Proton acceptor is the aspartate 861. ATP contacts are provided by aspartate 865, asparagine 866, and aspartate 900.

The protein belongs to the protein kinase superfamily. Ser/Thr protein kinase family. BUB1 subfamily. Part of the BUB1-BUB3 complex, composed of bub1 and bub3. Interacts with spc7 (when phosphorylated on MELT motifs); to recruit the bub1-bub3 complex to kinetochores. Interacts with mad3. In terms of processing, autophosphorylated.

It is found in the nucleus. The protein resides in the chromosome. It localises to the centromere. The protein localises to the kinetochore. The catalysed reaction is L-seryl-[protein] + ATP = O-phospho-L-seryl-[protein] + ADP + H(+). The enzyme catalyses L-threonyl-[protein] + ATP = O-phospho-L-threonyl-[protein] + ADP + H(+). Its function is as follows. Involved in mitotic spindle assembly checkpoint signaling, a process that delays anaphase until chromosomes are bioriented on the spindle, and in the repair of incorrect mitotic kinetochore-spindle microtubule attachments. Acts as a kinetochore scaffold for the recruitment of other spindle assembly checkpoint components. The chain is Spindle assembly checkpoint serine/threonine-protein kinase bub1 from Schizosaccharomyces pombe (strain 972 / ATCC 24843) (Fission yeast).